A 306-amino-acid polypeptide reads, in one-letter code: Type 2A encapsulin shell protein SrpI (306 aa).

It belongs to the encapsulin family. Family 2A subfamily. In terms of assembly, the 24.5 nm encapsulin nanocompartment is formed by 60 subunits; monomers form pentamers which assemble to form shells. There are 12 positively charged pores where the pentamers meet with a minimal pore diameter of 3.7 Angstroms as well 3-fold axis channels and dimer channels.

It is found in the encapsulin nanocompartment. In terms of biological role, shell component of a type 2A encapsulin nanocompartment. Expression in E.coli generates nanocompartments with an average diameter of 25 nm. They can be disassembled by treatment with 6M guanidine hydrochloride and reassembled with cargo. The nanocompartment is probably involved in sulfur metabolism. Probably allows passage of cysteine into its interior; during growth in light the physiological pH is 8-8.4, about 30-54% of free cysteine (charge -1) would be able to pass through the shell. The sequence is that of Type 2A encapsulin shell protein SrpI from Synechococcus elongatus (strain ATCC 33912 / PCC 7942 / FACHB-805) (Anacystis nidulans R2).